Here is a 69-residue protein sequence, read N- to C-terminus: Light-harvesting protein B-1015 alpha chain (69 aa).

At 2-20 the chain is on the cytoplasmic side; it reads ATEYRTASWKLWLILDPRR. Residues 21-41 traverse the membrane as a helical segment; sequence VLTALFVYLTVIALLIHFGLL. H37 is an a bacteriochlorophyll binding site. Residues 42–59 lie on the Periplasmic side of the membrane; it reads STDRLNWWEFQRGLPKAA. A propeptide spanning residues 60–69 is cleaved from the precursor; sequence SLVVVPPAVG.

It belongs to the antenna complex alpha subunit family. In terms of assembly, the core complex is formed by different alpha and beta chains, binding bacteriochlorophyll molecules, and arranged most probably in tetrameric structures disposed around the reaction center. The non-pigmented gamma chains may constitute additional components.

Its subcellular location is the cell inner membrane. Functionally, antenna complexes are light-harvesting systems, which transfer the excitation energy to the reaction centers. This is Light-harvesting protein B-1015 alpha chain (pufA) from Blastochloris viridis (Rhodopseudomonas viridis).